A 122-amino-acid chain; its full sequence is Large ribosomal subunit protein bL12 (122 aa).

The protein belongs to the bacterial ribosomal protein bL12 family. Homodimer. Part of the ribosomal stalk of the 50S ribosomal subunit. Forms a multimeric L10(L12)X complex, where L10 forms an elongated spine to which 2 to 4 L12 dimers bind in a sequential fashion. Binds GTP-bound translation factors.

In terms of biological role, forms part of the ribosomal stalk which helps the ribosome interact with GTP-bound translation factors. Is thus essential for accurate translation. The chain is Large ribosomal subunit protein bL12 from Streptococcus thermophilus (strain ATCC BAA-491 / LMD-9).